The following is a 103-amino-acid chain: Large ribosomal subunit protein uL24 (103 aa).

It belongs to the universal ribosomal protein uL24 family. As to quaternary structure, part of the 50S ribosomal subunit.

Its function is as follows. One of two assembly initiator proteins, it binds directly to the 5'-end of the 23S rRNA, where it nucleates assembly of the 50S subunit. One of the proteins that surrounds the polypeptide exit tunnel on the outside of the subunit. The chain is Large ribosomal subunit protein uL24 from Synechococcus sp. (strain CC9311).